Reading from the N-terminus, the 610-residue chain is MSKIIGIDLGTTNSCVTVLEGDEPKVIQNPEGSRTTPSVVAFKNGETQVGEVAKRQAITNPNTVQSIKRHMGTDYKVDIEGKSYTPQEISAMILQNLKNTAESYLGEKVDKAVITVPAYFNDAERQATKDAGKIAGLEVERIINEPTAAALAYGLDKTDKDEKVLVFDLGGGTFDVSILELGDGVFEVLSTAGDNKLGGDDFDQVIIDYLVAEFKKENGVDLSQDKMALQRLKDAAEKAKKDLSGVSQTQISLPFISAGENGPLHLEVNLTRSKFEELSDSLIRRTMEPTRQAMKDAGLTNSDIDEVILVGGSTRIPAVQEAVKKEIGKEPNKGVNPDEVVAMGAAIQGGVITGDVKDVVLLDVTPLSLGIEILGGRMNTLIERNTTIPTSKSQIYSTAVDNQPSVDVHVLQGERPMAADNKTLGRFQLTDIPPAERGKPQIEVTFDIDKNGIVNVTAKDLGTNKEQRITIQSSSSLSDEEIDRMVKDAEVNAEADKKRREEVDLRNEADSLVFQVEKTLTDLGENIGEEDKKSAEEKKDALKTALEGQDIEDIKSKKEELEKVIQELSAKVYEQAAQQQQQAQGANAGQNNDSTVEDAEFKEVKDDDKK.

Thr173 is subject to Phosphothreonine; by autocatalysis. 2 disordered regions span residues 525 to 544 (ENIGEEDKKSAEEKKDALKT) and 576 to 610 (AAQQQQQAQGANAGQNNDSTVEDAEFKEVKDDDKK). The span at 529–542 (EEDKKSAEEKKDAL) shows a compositional bias: basic and acidic residues. Low complexity predominate over residues 576–592 (AAQQQQQAQGANAGQNN). A compositionally biased stretch (basic and acidic residues) spans 599 to 610 (AEFKEVKDDDKK).

The protein belongs to the heat shock protein 70 family.

Its function is as follows. Acts as a chaperone. In Staphylococcus aureus (strain Mu3 / ATCC 700698), this protein is Chaperone protein DnaK.